The primary structure comprises 176 residues: bZIP transcription factor 8 (176 aa).

The segment at 44–101 is disordered; that stretch reads PNTSGGSDESMSDGSKIDPKRSPKYLEKRMKNNEAAKKSRASRKHREQKNQTENELLK. Residues 47 to 57 are compositionally biased toward low complexity; that stretch reads SGGSDESMSDG. A compositionally biased stretch (basic and acidic residues) spans 58–80; sequence SKIDPKRSPKYLEKRMKNNEAAK. The region spanning 65-128 is the bZIP domain; it reads SPKYLEKRMK…AQMQITIRDM (64 aa). The segment at 67 to 92 is basic motif; the sequence is KYLEKRMKNNEAAKKSRASRKHREQK. Over residues 81–90 the composition is skewed to basic residues; that stretch reads KSRASRKHRE. The segment covering 91–101 has biased composition (basic and acidic residues); sequence QKNQTENELLK. The interval 100–107 is leucine-zipper; the sequence is LKRKNAAL.

Belongs to the bZIP family.

This Caenorhabditis elegans protein is bZIP transcription factor 8 (zip-8).